The primary structure comprises 179 residues: MNLNSVPAGEKLPNDIYAIIEIPTNSNPIKYEVDKKTGILFVNRFIPTSMFYPCNYGYINHTISLDGDPLDILVPTPYPVLHGSVIRCNPIGVLKMIDESGEDAKIIAMPHQKLLAGYNNNIKNIDDISNLMKSQISHFFEHYKDLEKKKWTKVISWEDVKSAEKEILSSFNRKKTLNI.

Residues K30, R44, and Y56 each coordinate substrate. Positions 66, 71, and 103 each coordinate Mg(2+). Y143 is a binding site for substrate.

The protein belongs to the PPase family. Homohexamer. It depends on Mg(2+) as a cofactor.

The protein localises to the cytoplasm. It catalyses the reaction diphosphate + H2O = 2 phosphate + H(+). Functionally, catalyzes the hydrolysis of inorganic pyrophosphate (PPi) forming two phosphate ions. The protein is Inorganic pyrophosphatase of Wigglesworthia glossinidia brevipalpis.